Reading from the N-terminus, the 38-residue chain is Histone H5 (38 aa).

The segment covering 1-15 (TESPIPVPAPAPAAK) has biased composition (pro residues). The disordered stretch occupies residues 1 to 38 (TESPIPVPAPAPAAKPKPKRVSKRPASHPPYSDMIAAA). Positions 16–26 (PKPKRVSKRPA) are enriched in basic residues.

It belongs to the histone H1/H5 family. In terms of tissue distribution, erythroid cells.

It localises to the nucleus. It is found in the chromosome. Functionally, histone H5 performs the same function as H1, being necessary for the condensation of nucleosome chains into higher order structures, and replaces histone H1 in certain cells. This Columba livia (Rock dove) protein is Histone H5.